A 489-amino-acid polypeptide reads, in one-letter code: MNYFNSLNFRQKLINLRKCKLVEKNFFSKKCDILKRKNIVIVGCGSQGLNQGLNMRDSGLHVSYALRGSSILNKNKSWENATKNNFFVDTYENIIPTADLVINLTPDKQRKEVVTLLQKFMKENSVLGFSHGFHIVEIGQKIRNDITVIMVAPKCPGTEVREEYKKGFGVPSLIAVHMENDPKKIGFEIAKAWAYSLGSHRAGVLHSSFIAEVKSDLMGEQTILCGMLQTSSLVCYDQLVSQGKDPNYAGKLIQLGWESITESVKHGGITLMLNRLSNTAKIRAYILSKKLKVMFSSLFRKHMDDIISGEFSKNMIDDWNSDDKKLKEWRTQIKKTDFEKCKICHKEISEQEYFDQGLLMVAILKAGIELSFEIMVETGIKEESAYYESLHELPLIANTIARKRLYEMNLVISDTAEYGSYLFSQSAIPLLKEFMNELCPGDLGEKISDLQFDNVTLNKINHDIENHPVEIIGKKLRKYMVDMKPIKLS.

In terms of domain architecture, KARI N-terminal Rossmann spans 16–207 (LRKCKLVEKN…GSHRAGVLHS (192 aa)). Residues 44–47 (CGSQ), R67, S77, and 107–109 (DKQ) contribute to the NADP(+) site. The active site involves H131. G157 contacts NADP(+). KARI C-terminal knotted domains follow at residues 208-343 (SFIA…KCKI) and 344-483 (CHKE…MVDM). Mg(2+) contacts are provided by D216, E220, E388, and E392. S413 lines the substrate pocket.

It belongs to the ketol-acid reductoisomerase family. It depends on Mg(2+) as a cofactor.

The catalysed reaction is (2R)-2,3-dihydroxy-3-methylbutanoate + NADP(+) = (2S)-2-acetolactate + NADPH + H(+). It catalyses the reaction (2R,3R)-2,3-dihydroxy-3-methylpentanoate + NADP(+) = (S)-2-ethyl-2-hydroxy-3-oxobutanoate + NADPH + H(+). It participates in amino-acid biosynthesis; L-isoleucine biosynthesis; L-isoleucine from 2-oxobutanoate: step 2/4. The protein operates within amino-acid biosynthesis; L-valine biosynthesis; L-valine from pyruvate: step 2/4. Functionally, involved in the biosynthesis of branched-chain amino acids (BCAA). Catalyzes an alkyl-migration followed by a ketol-acid reduction of (S)-2-acetolactate (S2AL) to yield (R)-2,3-dihydroxy-isovalerate. In the isomerase reaction, S2AL is rearranged via a Mg-dependent methyl migration to produce 3-hydroxy-3-methyl-2-ketobutyrate (HMKB). In the reductase reaction, this 2-ketoacid undergoes a metal-dependent reduction by NADPH to yield (R)-2,3-dihydroxy-isovalerate. In Buchnera aphidicola subsp. Schlechtendalia chinensis, this protein is Ketol-acid reductoisomerase (NADP(+)).